The sequence spans 174 residues: MGKITFYEDRGFQGRCYECSSDCPNLQTYFSRCNSIRVDSGCWMLYERPNYQGHQYFLRRGDYPDYQQWMGFSDSIRSCRLIPHTGSHRMRLYEKEDHKGVMMELSEDCSCIQDRFHLSEVRSLHVLEGCWVLYEMPNYRGRQYLLRPQEYRRYHDWGAVDAKAGSLRRVVDLY.

Beta/gamma crystallin 'Greek key' domains follow at residues 2 to 40 (GKITFYEDRGFQGRCYECSSDCPNLQTYFSRCNSIRVDS) and 41 to 83 (GCWM…RLIP). An S-methylcysteine modification is found at Cys23. The connecting peptide stretch occupies residues 84–87 (HTGS). Beta/gamma crystallin 'Greek key' domains are found at residues 88 to 128 (HRMR…HVLE) and 129 to 171 (GCWV…RRVV).

Belongs to the beta/gamma-crystallin family.

In terms of biological role, crystallins are the dominant structural components of the vertebrate eye lens. The chain is Gamma-crystallin C (Crygc) from Rattus norvegicus (Rat).